Here is a 127-residue protein sequence, read N- to C-terminus: PanD regulatory factor (127 aa).

The 127-residue stretch at 1-127 (MKLTIIRLEK…TAQQGGWEKC (127 aa)) folds into the N-acetyltransferase domain. Interaction with PanD regions lie at residues 43-48 (RFNERL) and 66-76 (LRVREVTRRRG). Residues 66–68 (LRV) and 72–79 (TRRRGVGQ) contribute to the CoA site.

The protein belongs to the PanZ/PanM family. As to quaternary structure, interacts with PanD in the presence of CoA. Forms a heterooctameric complex composed of four PanD subunits and four PanZ subunits. Monomer in solution.

Its activity is regulated as follows. Activation of PanD processing occurs even at low CoA concentrations. In contrast, full inhibition of PanD catalytic activity only occurs at sufficiently high CoA concentrations. In terms of biological role, controls both the activation and catalytic activity of PanD in a coenzyme A (CoA)-dependent fashion. Binding of CoA or a derivative to PanZ leads to interaction with PanD, which promotes the processing and activation of pro-PanD, and subsequent substrate-mediated inhibition of the active form of PanD. Inhibition of PanD activity is probably the primary metabolic role of PanZ, allowing negative feedback regulation of pantothenate biosynthesis by CoA. The polypeptide is PanD regulatory factor (Escherichia coli (strain K12)).